A 118-amino-acid chain; its full sequence is Holo-[acyl-carrier-protein] synthase (118 aa).

Residues Asp8 and Glu58 each coordinate Mg(2+).

This sequence belongs to the P-Pant transferase superfamily. AcpS family. It depends on Mg(2+) as a cofactor.

The protein localises to the cytoplasm. The catalysed reaction is apo-[ACP] + CoA = holo-[ACP] + adenosine 3',5'-bisphosphate + H(+). In terms of biological role, transfers the 4'-phosphopantetheine moiety from coenzyme A to a Ser of acyl-carrier-protein. This is Holo-[acyl-carrier-protein] synthase from Streptococcus pyogenes serotype M5 (strain Manfredo).